A 608-amino-acid polypeptide reads, in one-letter code: Histone-arginine methyltransferase CARM1 (608 aa).

An interaction with C9orf72 region spans residues 28 to 139; sequence ATVSVFPGAR…GHTLERSVFS (112 aa). The region spanning 147–454 is the SAM-dependent MTase PRMT-type domain; the sequence is AVQYFQFYGY…KRQSYDISIV (308 aa). Gln160, Arg169, Gly193, and Glu215 together coordinate S-adenosyl-L-methionine. Position 217 is a phosphoserine (Ser217). Lys228 participates in a covalent cross-link: Glycyl lysine isopeptide (Lys-Gly) (interchain with G-Cter in ubiquitin). S-adenosyl-L-methionine contacts are provided by Glu244 and Ser272. Positions 347–380 are required for nuclear translocation; that stretch reads RILMAKSVKYTVNFLEAKEGDLHRIEIPFKFHML. Residues 500–608 are transactivation domain; sequence TGSTYNLSSG…IPTNTMHYGS (109 aa). Position 551 is a dimethylated arginine (Arg551).

The protein belongs to the class I-like SAM-binding methyltransferase superfamily. Protein arginine N-methyltransferase family. As to quaternary structure, homodimer. Interacts with NR1H4. Interacts with SNRPC. Interacts with the C-terminus of NCOA2/GRIP1, NCO3/ACTR and NCOA1/SRC1. Part of a complex consisting of CARM1, EP300/P300 and NCOA2/GRIP1. Interacts with FLII, TP53, myogenic factor MEF2, EP300/P300, TRIM24, CREBBP and CTNNB1. Interacts with RELA. Identified in a complex containing CARM1, TRIM24 and NCOA2/GRIP1. Interacts with NCOA3/SRC3. Interacts with SKP2. Interacts (via PH domain-like fold) with C9orf72. Interacts with PARP1; promoting PARP1 recruimtent to replication forks. Phosphorylation at Ser-217 is strongly increased during mitosis, and decreases rapidly to a very low, basal level after entry into the G1 phase of the cell cycle. Phosphorylation at Ser-217 interferes with S-adenosyl-L-methionine binding and strongly reduces methyltransferase activity. Phosphorylation at Ser-217 may promote cytosolic location. In terms of processing, auto-methylated on Arg-551. Methylation enhances transcription coactivator activity. Methylation is required for its role in the regulation of pre-mRNA alternative splicing. Post-translationally, ubiquitinated by E3 ubiquitin-protein ligase complex containing FBXO9 at Lys-228; leading to proteasomal degradation. As to expression, ubiquitously expressed. Within the brain, present in proliferating cells from lateral ventricular zone and dentate gyrus (at protein level).

It localises to the nucleus. The protein resides in the cytoplasm. The protein localises to the chromosome. The enzyme catalyses L-arginyl-[protein] + 2 S-adenosyl-L-methionine = N(omega),N(omega)-dimethyl-L-arginyl-[protein] + 2 S-adenosyl-L-homocysteine + 2 H(+). Methylation of H3R17 (H3R17me) by CARM1 is stimulated by preacetylation of H3 'Lys-18' (H3K18ac) H3 'Lys-23' (H3K23ac) by EP300 and blocked by citrullination of H3 'Arg-17' (H3R17ci) by PADI4. Functionally, methylates (mono- and asymmetric dimethylation) the guanidino nitrogens of arginyl residues in several proteins involved in DNA packaging, transcription regulation, pre-mRNA splicing, and mRNA stability. Recruited to promoters upon gene activation together with histone acetyltransferases from EP300/P300 and p160 families, methylates histone H3 at 'Arg-17' (H3R17me), forming mainly asymmetric dimethylarginine (H3R17me2a), leading to activation of transcription via chromatin remodeling. During nuclear hormone receptor activation and TCF7L2/TCF4 activation, acts synergically with EP300/P300 and either one of the p160 histone acetyltransferases NCOA1/SRC1, NCOA2/GRIP1 and NCOA3/ACTR or CTNNB1/beta-catenin to activate transcription. During myogenic transcriptional activation, acts together with NCOA3/ACTR as a coactivator for MEF2C. During monocyte inflammatory stimulation, acts together with EP300/P300 as a coactivator for NF-kappa-B. Acts as a coactivator for PPARG, promotes adipocyte differentiation and the accumulation of brown fat tissue. Plays a role in the regulation of pre-mRNA alternative splicing by methylation of splicing factors. Also seems to be involved in p53/TP53 transcriptional activation. Methylates EP300/P300, both at 'Arg-2142', which may loosen its interaction with NCOA2/GRIP1, and at 'Arg-580' and 'Arg-604' in the KIX domain, which impairs its interaction with CREB and inhibits CREB-dependent transcriptional activation. Also methylates arginine residues in RNA-binding proteins PABPC1, ELAVL1 and ELAV4, which may affect their mRNA-stabilizing properties and the half-life of their target mRNAs. Acts as a transcriptional coactivator of ACACA/acetyl-CoA carboxylase by enriching H3R17 methylation at its promoter, thereby positively regulating fatty acid synthesis. Independently of its methyltransferase activity, involved in replication fork progression: promotes PARP1 recruitment to replication forks, leading to poly-ADP-ribosylation of chromatin at replication forks and reduced fork speed. The protein is Histone-arginine methyltransferase CARM1 (Carm1) of Mus musculus (Mouse).